The sequence spans 393 residues: DNA primase large subunit PriL (393 aa).

[4Fe-4S] cluster is bound by residues cysteine 230, cysteine 339, cysteine 350, and cysteine 356.

It belongs to the eukaryotic-type primase large subunit family. As to quaternary structure, heterodimer of a small subunit (PriS) and a large subunit (PriL). Requires [4Fe-4S] cluster as cofactor.

Regulatory subunit of DNA primase, an RNA polymerase that catalyzes the synthesis of short RNA molecules used as primers for DNA polymerase during DNA replication. Stabilizes and modulates the activity of the small subunit, increasing the rate of DNA synthesis, and conferring RNA synthesis capability. The DNA polymerase activity may enable DNA primase to also catalyze primer extension after primer synthesis. May also play a role in DNA repair. Displays gap-filling and strand-displacement activities. This is DNA primase large subunit PriL from Pyrococcus abyssi (strain GE5 / Orsay).